The sequence spans 152 residues: uncharacterized protein (152 aa).

The Cytoplasmic segment spans residues 1-5 (MWFPQ). Residues 6–26 (IIAGMAAGGAASAMTPGKVLF) form a helical membrane-spanning segment. Topologically, residues 27–38 (TNALGLGCSRSR) are extracellular. Residues 39 to 59 (GLFLEMFGTAVLCLTVLMTAV) traverse the membrane as a helical segment. Residues 60-65 (EKRETN) are Cytoplasmic-facing. A helical membrane pass occupies residues 66-86 (FMAALPIGISLFMAHMALTGY). Residues 87–110 (TGTGVNPARSLGAAVAARYFPHYH) lie on the Extracellular side of the membrane. The short motif at 92 to 94 (NPA) is the NPA element. The helical transmembrane segment at 111–131 (WIYWISPLLGAFLAWSVWQLL) threads the bilayer. The Cytoplasmic segment spans residues 132–152 (QILDYTTYVNAEKAAGQKKED).

Belongs to the MIP/aquaporin (TC 1.A.8) family.

It localises to the membrane. This is an uncharacterized protein from Saccharomyces cerevisiae (strain RM11-1a) (Baker's yeast).